A 525-amino-acid polypeptide reads, in one-letter code: Bifunctional purine biosynthesis protein PurH (525 aa).

One can recognise an MGS-like domain in the interval 1-149 (MSDPVIKRAL…KNHESVTVIT (149 aa)).

This sequence belongs to the PurH family.

The catalysed reaction is (6R)-10-formyltetrahydrofolate + 5-amino-1-(5-phospho-beta-D-ribosyl)imidazole-4-carboxamide = 5-formamido-1-(5-phospho-D-ribosyl)imidazole-4-carboxamide + (6S)-5,6,7,8-tetrahydrofolate. The enzyme catalyses IMP + H2O = 5-formamido-1-(5-phospho-D-ribosyl)imidazole-4-carboxamide. Its pathway is purine metabolism; IMP biosynthesis via de novo pathway; 5-formamido-1-(5-phospho-D-ribosyl)imidazole-4-carboxamide from 5-amino-1-(5-phospho-D-ribosyl)imidazole-4-carboxamide (10-formyl THF route): step 1/1. It participates in purine metabolism; IMP biosynthesis via de novo pathway; IMP from 5-formamido-1-(5-phospho-D-ribosyl)imidazole-4-carboxamide: step 1/1. This Chlorobium phaeobacteroides (strain BS1) protein is Bifunctional purine biosynthesis protein PurH.